Here is a 715-residue protein sequence, read N- to C-terminus: 1,4-alpha-glucan branching enzyme GlgB (715 aa).

Asp396 (nucleophile) is an active-site residue. The active-site Proton donor is the Glu449.

The protein belongs to the glycosyl hydrolase 13 family. GlgB subfamily. As to quaternary structure, monomer.

It catalyses the reaction Transfers a segment of a (1-&gt;4)-alpha-D-glucan chain to a primary hydroxy group in a similar glucan chain.. The protein operates within glycan biosynthesis; glycogen biosynthesis. In terms of biological role, catalyzes the formation of the alpha-1,6-glucosidic linkages in glycogen by scission of a 1,4-alpha-linked oligosaccharide from growing alpha-1,4-glucan chains and the subsequent attachment of the oligosaccharide to the alpha-1,6 position. In Aliivibrio fischeri (strain ATCC 700601 / ES114) (Vibrio fischeri), this protein is 1,4-alpha-glucan branching enzyme GlgB.